The sequence spans 324 residues: Glyoxylate/hydroxypyruvate reductase B (324 aa).

Catalysis depends on residues R237 and E266. The Proton donor role is filled by H285.

This sequence belongs to the D-isomer specific 2-hydroxyacid dehydrogenase family. GhrB subfamily. In terms of assembly, homodimer.

It is found in the cytoplasm. It catalyses the reaction glycolate + NADP(+) = glyoxylate + NADPH + H(+). The enzyme catalyses (R)-glycerate + NAD(+) = 3-hydroxypyruvate + NADH + H(+). The catalysed reaction is (R)-glycerate + NADP(+) = 3-hydroxypyruvate + NADPH + H(+). In terms of biological role, catalyzes the NADPH-dependent reduction of glyoxylate and hydroxypyruvate into glycolate and glycerate, respectively. The sequence is that of Glyoxylate/hydroxypyruvate reductase B from Escherichia coli (strain K12 / MC4100 / BW2952).